We begin with the raw amino-acid sequence, 127 residues long: Fluoride-specific ion channel FluC (127 aa).

The next 4 membrane-spanning stretches (helical) occupy residues 4 to 24, 39 to 59, 68 to 88, and 102 to 122; these read LDYL…YLVS, GTII…FAAI, AILF…TFTY, and VAYA…GMIL. Na(+) contacts are provided by Gly-78 and Thr-81.

Belongs to the fluoride channel Fluc/FEX (TC 1.A.43) family.

It localises to the cell inner membrane. It catalyses the reaction fluoride(in) = fluoride(out). Its activity is regulated as follows. Na(+) is not transported, but it plays an essential structural role and its presence is essential for fluoride channel function. In terms of biological role, fluoride-specific ion channel. Important for reducing fluoride concentration in the cell, thus reducing its toxicity. This is Fluoride-specific ion channel FluC from Thermotoga maritima (strain ATCC 43589 / DSM 3109 / JCM 10099 / NBRC 100826 / MSB8).